The sequence spans 272 residues: Replication-associated protein A (272 aa).

A CRESS-DNA virus Rep endonuclease domain is found at 11 to 114 (SHRSPNTFLT…PLALFERGTF (104 aa)). The RCR-1 signature appears at 18–21 (FLTY). Residues E52 and H62 each coordinate a divalent metal cation. The RCR-2 motif lies at 60–65 (CLHALI). The active-site For DNA cleavage activity is Y100. The short motif at 100–103 (YITK) is the RCR-3 element. E104 contributes to the a divalent metal cation binding site. Residues 175–187 (SANKLFPDIQEEF) form an oligomerization region. Residues 198-202 (LLCNE) carry the LXCXE motif, interaction with host RBR1 motif. The tract at residues 221 to 230 (LLLQPNCYSI) is transactivation. The span at 251-265 (QGSAASTSSVQQGQE) shows a compositional bias: polar residues. Residues 251–272 (QGSAASTSSVQQGQENLHGPEA) are disordered.

It belongs to the geminiviridae Rep protein family. In terms of assembly, homooligomer. Interacts (via LXCXE domain) with host retinoblastoma-related protein 1 (RBR1), and may thereby deregulate the host cell cycle. Part of the C- and V-complexes which are RepA-Rep-DNA complexes involved in the c-sense and v-sense transcription.

It localises to the host nucleus. The protein resides in the host cytoplasm. In terms of biological role, implicated in enhancement of V-sense gene expression. Acts a an inhibitor of C-sense gene transcription. The protein is Replication-associated protein A of Avena sativa (Oat).